The sequence spans 164 residues: Transcription elongation factor GreA (164 aa).

It belongs to the GreA/GreB family.

Functionally, necessary for efficient RNA polymerase transcription elongation past template-encoded arresting sites. The arresting sites in DNA have the property of trapping a certain fraction of elongating RNA polymerases that pass through, resulting in locked ternary complexes. Cleavage of the nascent transcript by cleavage factors such as GreA or GreB allows the resumption of elongation from the new 3'terminus. GreA releases sequences of 2 to 3 nucleotides. The protein is Transcription elongation factor GreA of Helicobacter acinonychis (strain Sheeba).